Reading from the N-terminus, the 230-residue chain is MVKLVFARHGESEWNKANLFTGWADVDLSEKGTQQAIDAGKLIQAAGIEFDLAFTSVLKRAIKTTNLALEAADQLWVPVEKSWRLNERHYGGLTGKNKAEAAEQFGDEQVHIWRRSYDVLPPDMAKDDEHSAHTDRRYASLDDSVIPDAENLKVTLERALPFWEDKIAPALKDGKNVFVGAHGNSIRALVKHIKQLSDDEIMDVEIPNFPPLVFEFDEKLNLVSEYYLGK.

Residues 8 to 15 (RHGESEWN), 21 to 22 (TG), arginine 60, 87 to 90 (ERHY), lysine 98, 114 to 115 (RR), and 183 to 184 (GN) contribute to the substrate site. Residue histidine 9 is the Tele-phosphohistidine intermediate of the active site. Catalysis depends on glutamate 87, which acts as the Proton donor/acceptor.

It belongs to the phosphoglycerate mutase family. BPG-dependent PGAM subfamily.

It catalyses the reaction (2R)-2-phosphoglycerate = (2R)-3-phosphoglycerate. Its pathway is carbohydrate degradation; glycolysis; pyruvate from D-glyceraldehyde 3-phosphate: step 3/5. Its function is as follows. Catalyzes the interconversion of 2-phosphoglycerate and 3-phosphoglycerate. This Streptococcus agalactiae serotype Ia (strain ATCC 27591 / A909 / CDC SS700) protein is 2,3-bisphosphoglycerate-dependent phosphoglycerate mutase.